A 160-amino-acid chain; its full sequence is Deoxyuridine 5'-triphosphate nucleotidohydrolase (160 aa).

Residues 79-81, Asn92, 96-98, and Lys106 each bind substrate; these read RSG and TVD.

The protein belongs to the dUTPase family. Mg(2+) is required as a cofactor.

The catalysed reaction is dUTP + H2O = dUMP + diphosphate + H(+). The protein operates within pyrimidine metabolism; dUMP biosynthesis; dUMP from dCTP (dUTP route): step 2/2. Its function is as follows. This enzyme is involved in nucleotide metabolism: it produces dUMP, the immediate precursor of thymidine nucleotides and it decreases the intracellular concentration of dUTP so that uracil cannot be incorporated into DNA. The polypeptide is Deoxyuridine 5'-triphosphate nucleotidohydrolase (Rhizobium meliloti (strain 1021) (Ensifer meliloti)).